The primary structure comprises 334 residues: Ferredoxin--NADP reductase (334 aa).

FAD contacts are provided by aspartate 33, glutamine 41, tyrosine 46, alanine 86, phenylalanine 120, aspartate 286, and threonine 327.

This sequence belongs to the ferredoxin--NADP reductase type 2 family. Homodimer. FAD serves as cofactor.

It carries out the reaction 2 reduced [2Fe-2S]-[ferredoxin] + NADP(+) + H(+) = 2 oxidized [2Fe-2S]-[ferredoxin] + NADPH. The chain is Ferredoxin--NADP reductase from Rickettsia typhi (strain ATCC VR-144 / Wilmington).